The chain runs to 434 residues: Serine hydroxymethyltransferase (434 aa).

(6S)-5,6,7,8-tetrahydrofolate is bound by residues L133 and 137–139; that span reads GHL. K242 is subject to N6-(pyridoxal phosphate)lysine. Residue 366-368 participates in (6S)-5,6,7,8-tetrahydrofolate binding; the sequence is SPF.

The protein belongs to the SHMT family. In terms of assembly, homodimer. It depends on pyridoxal 5'-phosphate as a cofactor.

It is found in the cytoplasm. It carries out the reaction (6R)-5,10-methylene-5,6,7,8-tetrahydrofolate + glycine + H2O = (6S)-5,6,7,8-tetrahydrofolate + L-serine. It participates in one-carbon metabolism; tetrahydrofolate interconversion. The protein operates within amino-acid biosynthesis; glycine biosynthesis; glycine from L-serine: step 1/1. Its function is as follows. Catalyzes the reversible interconversion of serine and glycine with tetrahydrofolate (THF) serving as the one-carbon carrier. This reaction serves as the major source of one-carbon groups required for the biosynthesis of purines, thymidylate, methionine, and other important biomolecules. Also exhibits THF-independent aldolase activity toward beta-hydroxyamino acids, producing glycine and aldehydes, via a retro-aldol mechanism. This Erythrobacter litoralis (strain HTCC2594) protein is Serine hydroxymethyltransferase.